Here is a 248-residue protein sequence, read N- to C-terminus: MSSRKFFVGGNWKMNGDKESLGELIMTLNTASLNDETDVVCGAPSIYLDYARSKLDQRIGVAAQNCYKVPKGAFTGEISPAMIKDCGIDWVILGHSERRHVFGESDELIGQKVAHCLESDLGVIACIGEKLEEREAGTTEDVVFEQTKVIADNVKDWTRVVLAYEPVWAIGTGKTASPEQAQEVHEKLRGWLRANVSDAVADSVRIIYGGSVTGGNCKELAAQADVDGFLVGGASLKPEFVDIINARS.

Substrate contacts are provided by Asn-11 and Lys-13. The active-site Electrophile is the His-95. Glu-165 acts as the Proton acceptor in catalysis.

This sequence belongs to the triosephosphate isomerase family. In terms of assembly, homodimer.

It localises to the cytoplasm. The enzyme catalyses dihydroxyacetone phosphate = methylglyoxal + phosphate. It carries out the reaction D-glyceraldehyde 3-phosphate = dihydroxyacetone phosphate. Its pathway is carbohydrate degradation; glycolysis; D-glyceraldehyde 3-phosphate from glycerone phosphate: step 1/1. It participates in carbohydrate biosynthesis; gluconeogenesis. Its function is as follows. Triosephosphate isomerase is an extremely efficient metabolic enzyme that catalyzes the interconversion between dihydroxyacetone phosphate (DHAP) and D-glyceraldehyde-3-phosphate (G3P) in glycolysis and gluconeogenesis. Functionally, it is also responsible for the non-negligible production of methylglyoxal a reactive cytotoxic side-product that modifies and can alter proteins, DNA and lipids. The protein is Triosephosphate isomerase A (tpi1a) of Danio rerio (Zebrafish).